The primary structure comprises 274 residues: 16S rRNA (guanine(1405)-N(7))-methyltransferase (274 aa).

S-adenosyl-L-methionine-binding positions include F64, 102-104 (HVS), R108, A133, D156, 182-183 (DL), L198, and Q207.

Belongs to the methyltransferase superfamily. Aminoglycoside resistance family.

The enzyme catalyses guanosine(1405) in 16S rRNA + S-adenosyl-L-methionine = N(7)-methylguanosine(1405) in 16S rRNA + S-adenosyl-L-homocysteine. Its function is as follows. Specifically methylates the N(7) position of guanine 1405 in 16S rRNA. Confers resistance to various aminoglycosides, including gentamicin and kanamycin. In Micromonospora echinospora (Micromonospora purpurea), this protein is 16S rRNA (guanine(1405)-N(7))-methyltransferase (grm).